The primary structure comprises 640 residues: Chaperone protein DnaK (640 aa).

A Phosphothreonine; by autocatalysis modification is found at T201. Residues 603 to 621 (AASADQGGAPGADAGNAGK) show a composition bias toward low complexity. Positions 603 to 625 (AASADQGGAPGADAGNAGKAQDD) are disordered.

It belongs to the heat shock protein 70 family.

Its function is as follows. Acts as a chaperone. The sequence is that of Chaperone protein DnaK from Stenotrophomonas maltophilia (strain K279a).